The primary structure comprises 624 residues: Chaperone protein HtpG (624 aa).

The interval 1-336 (MKGQETRGFQ…SNDLPLNVSR (336 aa)) is a; substrate-binding. Positions 337 to 552 (EILQDSTVTR…ADEMSTQMAK (216 aa)) are b. A c region spans residues 553-624 (LFAAAGQSVP…IRRMNQLLVS (72 aa)).

This sequence belongs to the heat shock protein 90 family. As to quaternary structure, homodimer.

It localises to the cytoplasm. In terms of biological role, molecular chaperone. Has ATPase activity. The sequence is that of Chaperone protein HtpG from Salmonella paratyphi B (strain ATCC BAA-1250 / SPB7).